The sequence spans 387 residues: EARP-interacting protein homolog (387 aa).

4 WD repeats span residues 132 to 172 (TAHG…TKSV), 182 to 222 (KGQL…QIYC), 226 to 266 (AHGQ…EPVK), and 270 to 310 (EHSH…SEPF). A disordered region spans residues 311-339 (GHLVDDEDLSDQEDNPQEEKTKEPLQDSI). The segment covering 315–326 (DDEDLSDQEDNP) has biased composition (acidic residues). A WD 5 repeat occupies 345 to 385 (EHEDSVYAVEWSSADPWLFASLSYDGRLVINRVPRALKYNI).

Belongs to the WD repeat EIPR1 family.

The protein localises to the golgi apparatus. Its subcellular location is the trans-Golgi network. Functionally, may act as a component of endosomal retrieval machinery that is involved in protein transport from early endosomes to either recycling endosomes or the trans-Golgi network. The protein is EARP-interacting protein homolog of Xenopus laevis (African clawed frog).